The chain runs to 336 residues: Ketol-acid reductoisomerase (NADP(+)) 1 (336 aa).

A KARI N-terminal Rossmann domain is found at 2-181 (AKVYYEKDVT…GATRAGVLET (180 aa)). NADP(+) is bound by residues 25 to 28 (YGSQ), R48, S52, and 82 to 85 (DELQ). The active site involves H107. Position 133 (G133) interacts with NADP(+). The KARI C-terminal knotted domain maps to 182-327 (TFKEETETDL…RKLREMMPFV (146 aa)). Residues D190, E194, E226, and E230 each contribute to the Mg(2+) site. S251 contributes to the substrate binding site.

It belongs to the ketol-acid reductoisomerase family. Mg(2+) serves as cofactor.

The catalysed reaction is (2R)-2,3-dihydroxy-3-methylbutanoate + NADP(+) = (2S)-2-acetolactate + NADPH + H(+). It catalyses the reaction (2R,3R)-2,3-dihydroxy-3-methylpentanoate + NADP(+) = (S)-2-ethyl-2-hydroxy-3-oxobutanoate + NADPH + H(+). The protein operates within amino-acid biosynthesis; L-isoleucine biosynthesis; L-isoleucine from 2-oxobutanoate: step 2/4. It functions in the pathway amino-acid biosynthesis; L-valine biosynthesis; L-valine from pyruvate: step 2/4. In terms of biological role, involved in the biosynthesis of branched-chain amino acids (BCAA). Catalyzes an alkyl-migration followed by a ketol-acid reduction of (S)-2-acetolactate (S2AL) to yield (R)-2,3-dihydroxy-isovalerate. In the isomerase reaction, S2AL is rearranged via a Mg-dependent methyl migration to produce 3-hydroxy-3-methyl-2-ketobutyrate (HMKB). In the reductase reaction, this 2-ketoacid undergoes a metal-dependent reduction by NADPH to yield (R)-2,3-dihydroxy-isovalerate. In Bacillus cereus (strain ZK / E33L), this protein is Ketol-acid reductoisomerase (NADP(+)) 1.